A 608-amino-acid polypeptide reads, in one-letter code: Probable cytosolic Fe-S cluster assembly factor SPAC806.02c (608 aa).

An ATP-binding site is contributed by 13-20 (GKGGVGKS). Cysteine 201 and cysteine 204 together coordinate [4Fe-4S] cluster. WD repeat units follow at residues 288-327 (GHTG…LVHV), 331-371 (FHTR…WECT), 376-415 (GHEN…EFDC), 421-460 (EHTQ…WALT), 465-504 (GHTN…EDVA), 529-567 (IHKG…EALW), and 576-608 (AHGV…WSFK).

In the N-terminal section; belongs to the Mrp/NBP35 ATP-binding proteins family. NUBP2/CFD1 subfamily. This sequence in the C-terminal section; belongs to the WD repeat CIA1 family. Heterotetramer of 2 nbp35 and 2 SPAC806.02c chains. [4Fe-4S] cluster serves as cofactor.

The protein resides in the cytoplasm. It is found in the nucleus. In terms of biological role, fusion protein of two essential components of the cytosolic iron-sulfur (Fe/S) protein assembly (CIA) machinery. Required for maturation of extramitochondrial Fe-S proteins. May form a heterotetramer with nubp35, functioning as a Fe-S scaffold complex, mediating the de novo assembly of an Fe-S cluster and its transfer to target apoproteins. The sequence is that of Probable cytosolic Fe-S cluster assembly factor SPAC806.02c from Schizosaccharomyces pombe (strain 972 / ATCC 24843) (Fission yeast).